The chain runs to 168 residues: Photosystem I assembly protein Ycf3 (168 aa).

TPR repeat units lie at residues 35 to 68 (AFTY…EIDP), 72 to 105 (SYIL…NPFL), and 120 to 153 (GEQA…TPGN).

Belongs to the Ycf3 family.

Its subcellular location is the plastid. It is found in the chloroplast thylakoid membrane. Functionally, essential for the assembly of the photosystem I (PSI) complex. May act as a chaperone-like factor to guide the assembly of the PSI subunits. In Calycanthus floridus var. glaucus (Eastern sweetshrub), this protein is Photosystem I assembly protein Ycf3.